The following is an 80-amino-acid chain: Conotoxin SmIVB (80 aa).

The signal sequence occupies residues 1-21 (MGMRMMFTVFLLVVLATTVVS). Residues 22-38 (IPSDRASDGRNAEVNER) constitute a propeptide that is removed on maturation. The residue at position 40 (proline 40) is a 4-hydroxyproline. O-linked (HexNAc...) serine glycosylation is present at serine 45. Proline 55, proline 60, proline 61, proline 70, and proline 72 each carry 4-hydroxyproline. Serine 75 is subject to Serine amide. A propeptide spanning residues 76-80 (GRRNH) is cleaved from the precursor.

This sequence belongs to the conotoxin A superfamily. Post-translationally, contains 3 disulfide bonds. Expressed by the venom duct.

The protein localises to the secreted. Functionally, neurotoxin with probable activity on sodium channel. Induces intense repetitive firing of the frog neuromuscular junction, leading to a tetanic contracture in muscle fiber (spastic paralysis). In vivo, shows the same effect as the whole venom when injected on fish prey. This chain is Conotoxin SmIVB, found in Conus stercusmuscarum (Fly-specked cone).